Consider the following 429-residue polypeptide: MFDPTERGTAIDIEVNDRLRKTLALILAGGRGSRLMDLTDWHAKPAIPFAGKFRIVDFTLSNCINSGIRRIGVLTQYKAHSLLQHIQRGWGFLRGEFNEFIELLPAQQRTQGENWYKGTADAVFQNLDIIHAHRPEHVLVLAGDHVYKMHYGKMLAHHLAAGADVTVACIEVPLETAKGFGVMAVDEDDRVIRFDEKPDHPQPMPGHPDQALASMGIYIFNAQLLFDLLQKDSINPETSHDFGKDIIPSLVKSHRVIAHHFQDSCVMHEGAREHYWRDVGTIDAYWEANIDLTTVTPALNLYDESWPIWTDQPQSPPAKFVFDSEHRRGMAVDSLVAGGCIVSGAVVRRSMLFSNVRVNSFCVVEDAVILPNVDIGRHARLKRCIVDQGVVVPPGLVVGEDPVLDAKRFHRTEKGITLVTAEKLKLLGA.

Alpha-D-glucose 1-phosphate-binding positions include Y116, G181, 196-197 (EK), and S214.

This sequence belongs to the bacterial/plant glucose-1-phosphate adenylyltransferase family. Homotetramer.

It carries out the reaction alpha-D-glucose 1-phosphate + ATP + H(+) = ADP-alpha-D-glucose + diphosphate. It functions in the pathway glycan biosynthesis; glycogen biosynthesis. In terms of biological role, involved in the biosynthesis of ADP-glucose, a building block required for the elongation reactions to produce glycogen. Catalyzes the reaction between ATP and alpha-D-glucose 1-phosphate (G1P) to produce pyrophosphate and ADP-Glc. The sequence is that of Glucose-1-phosphate adenylyltransferase from Paramagnetospirillum magneticum (strain ATCC 700264 / AMB-1) (Magnetospirillum magneticum).